The following is a 300-amino-acid chain: Phosphoribosylaminoimidazole-succinocarboxamide synthase (300 aa).

It belongs to the SAICAR synthetase family.

It catalyses the reaction 5-amino-1-(5-phospho-D-ribosyl)imidazole-4-carboxylate + L-aspartate + ATP = (2S)-2-[5-amino-1-(5-phospho-beta-D-ribosyl)imidazole-4-carboxamido]succinate + ADP + phosphate + 2 H(+). Its pathway is purine metabolism; IMP biosynthesis via de novo pathway; 5-amino-1-(5-phospho-D-ribosyl)imidazole-4-carboxamide from 5-amino-1-(5-phospho-D-ribosyl)imidazole-4-carboxylate: step 1/2. In Methylibium petroleiphilum (strain ATCC BAA-1232 / LMG 22953 / PM1), this protein is Phosphoribosylaminoimidazole-succinocarboxamide synthase.